The chain runs to 396 residues: MAGRAPQHALRVGCRAVPEALSKPAQQSRCLSSTVPRQATYPVVSFNKTSSPELKEALETLREKVILPTYLPPELRQKIFNKKYEKELAHDPVTIQIDGQPQRFSYINMLTDMPNTPKNIRAALLSMKNGGDFANLSGLLEGMHRANRKLPYWLSAQIVRKACKAGHLQLILNMVRDVKRTGFTLERHETVNELLFWIQRFAWKSDYSEPETRKALREVQEILDALEGDERHMSKDRKRQQALTRFPYHRDPQFLAARLNLTAELAARRAVTGQTSEQQLNSANDVKNLVKYAEQLVRLWPADKALLDMYTDEAYVARVDLRYLIKPQVHLRYASFTLQALKNAAKIVGQLGHGPLAAQLINRAAAVEAESQLAYAKVDDGMAGQKIYEMVVGGKK.

Belongs to the mitochondrion-specific ribosomal protein mS27 family. Component of the mitochondrial small ribosomal subunit (mt-SSU). Mature N.crassa 74S mitochondrial ribosomes consist of a small (37S) and a large (54S) subunit. The 37S small subunit contains a 16S ribosomal RNA (16S mt-rRNA) and 32 different proteins. The 54S large subunit contains a 23S rRNA (23S mt-rRNA) and 42 different proteins.

It is found in the mitochondrion. Component of the mitochondrial ribosome (mitoribosome), a dedicated translation machinery responsible for the synthesis of mitochondrial genome-encoded proteins, including at least some of the essential transmembrane subunits of the mitochondrial respiratory chain. The mitoribosomes are attached to the mitochondrial inner membrane and translation products are cotranslationally integrated into the membrane. This chain is Small ribosomal subunit protein mS27 (mrp13), found in Neurospora crassa (strain ATCC 24698 / 74-OR23-1A / CBS 708.71 / DSM 1257 / FGSC 987).